The chain runs to 84 residues: Neurotoxin BmK-M11 (84 aa).

The signal sequence occupies residues 1–19 (MNYLVMISFALLLMTGVES). Positions 21–83 (RDAYIAKPEN…VPIRVPGKCH (63 aa)) constitute an LCN-type CS-alpha/beta domain. 4 disulfide bridges follow: Cys-31–Cys-82, Cys-35–Cys-55, Cys-41–Cys-65, and Cys-45–Cys-67. Residue Arg-84 is a propeptide, removed by a carboxypeptidase.

The protein belongs to the long (4 C-C) scorpion toxin superfamily. Sodium channel inhibitor family. Alpha subfamily. As to expression, expressed by the venom gland.

The protein resides in the secreted. Its function is as follows. Alpha toxins bind voltage-independently at site-3 of sodium channels (Nav) and inhibit the inactivation of the activated channels, thereby blocking neuronal transmission. This recombinant toxin selectively inhibits the fast inactivation of mNav1.4/SCN4A (EC(50)=82.3 nM) (tested in HEK293 cells). This is Neurotoxin BmK-M11 from Olivierus martensii (Manchurian scorpion).